We begin with the raw amino-acid sequence, 291 residues long: 4-diphosphocytidyl-2-C-methyl-D-erythritol kinase (291 aa).

Lys-10 is a catalytic residue. Residue 94–104 (PVSAGLAGGSS) participates in ATP binding. Residue Asp-136 is part of the active site.

The protein belongs to the GHMP kinase family. IspE subfamily.

It catalyses the reaction 4-CDP-2-C-methyl-D-erythritol + ATP = 4-CDP-2-C-methyl-D-erythritol 2-phosphate + ADP + H(+). The protein operates within isoprenoid biosynthesis; isopentenyl diphosphate biosynthesis via DXP pathway; isopentenyl diphosphate from 1-deoxy-D-xylulose 5-phosphate: step 3/6. In terms of biological role, catalyzes the phosphorylation of the position 2 hydroxy group of 4-diphosphocytidyl-2C-methyl-D-erythritol. This chain is 4-diphosphocytidyl-2-C-methyl-D-erythritol kinase, found in Listeria welshimeri serovar 6b (strain ATCC 35897 / DSM 20650 / CCUG 15529 / CIP 8149 / NCTC 11857 / SLCC 5334 / V8).